The chain runs to 198 residues: MELPDPVRQRLGNFSRAVFSDSNRTGPESNEGPENEMVSSLALQMSLYFNTYYFPLWWVSSIMMLHMKYSILPDYYKFIVITVIILITLIEAIRLYLGYVGNLQEKVPELAGFWLLSLLLQLPLILFLLFNEGLTNLPLEKAIHIIFTLFLAFQVVAAFLTLRKMVNQLAVRFHLQDFDRLSANRGDMRRMRSCIEEI.

Asn-13 and Asn-23 each carry an N-linked (GlcNAc...) asparagine glycan. 4 helical membrane-spanning segments follow: residues 45–65 (MSLYFNTYYFPLWWVSSIMML), 78–98 (FIVITVIILITLIEAIRLYLG), 110–130 (LAGFWLLSLLLQLPLILFLLF), and 142–162 (AIHIIFTLFLAFQVVAAFLTL).

This sequence belongs to the TMEM17 family. Part of the tectonic-like complex (also named B9 complex).

The protein resides in the cell projection. Its subcellular location is the cilium membrane. In terms of biological role, transmembrane component of the tectonic-like complex, a complex localized at the transition zone of primary cilia and acting as a barrier that prevents diffusion of transmembrane proteins between the cilia and plasma membranes. Required for ciliogenesis and sonic hedgehog/SHH signaling. The polypeptide is Transmembrane protein 17 (TMEM17) (Homo sapiens (Human)).